The sequence spans 574 residues: Putative DNA-directed RNA polymerase subunit alpha-like 1 (574 aa).

The segment at 1 to 352 is alpha N-terminal domain (alpha-NTD); that stretch reads MTNNKNFADW…ELFSLFLQTS (352 aa). Residues 419-574 form an alpha C-terminal domain (alpha-CTD) region; the sequence is PDYDRYNSIT…RERKRGNREF (156 aa). A disordered region spans residues 534–574; it reads QETLRKEQDEQSSQQQKDQMEKRRWERQNRERERKRGNREF. The span at 551–574 shows a compositional bias: basic and acidic residues; that stretch reads DQMEKRRWERQNRERERKRGNREF.

Belongs to the RNA polymerase alpha chain family. As to quaternary structure, in plastids the minimal PEP RNA polymerase catalytic core is composed of four subunits: alpha, beta, beta', and beta''. When a (nuclear-encoded) sigma factor is associated with the core the holoenzyme is formed, which can initiate transcription.

It is found in the plastid. The protein localises to the chloroplast. The catalysed reaction is RNA(n) + a ribonucleoside 5'-triphosphate = RNA(n+1) + diphosphate. Functionally, DNA-dependent RNA polymerase catalyzes the transcription of DNA into RNA using the four ribonucleoside triphosphates as substrates. The protein is Putative DNA-directed RNA polymerase subunit alpha-like 1 (rpoAL1-A) of Pelargonium hortorum (Common geranium).